The primary structure comprises 205 residues: Cytochrome c oxidase subunit 3 (205 aa).

5 helical membrane-spanning segments follow: residues 28-48 (GTIV…AMYF), 72-92 (ALVI…GVFA), 104-124 (WFSL…YEYF), 142-162 (FFIT…AFVV), and 184-204 (SYYW…IYFI).

The protein belongs to the cytochrome c oxidase subunit 3 family. As to quaternary structure, associates with subunits I, II and IV to form cytochrome c oxidase.

The protein localises to the cell membrane. The catalysed reaction is 4 Fe(II)-[cytochrome c] + O2 + 8 H(+)(in) = 4 Fe(III)-[cytochrome c] + 2 H2O + 4 H(+)(out). In Corynebacterium diphtheriae (strain ATCC 700971 / NCTC 13129 / Biotype gravis), this protein is Cytochrome c oxidase subunit 3 (ctaE).